The following is a 412-amino-acid chain: uncharacterized protein (412 aa).

The protein belongs to the PQQ oxidoreductase GdhB family. The cofactor is pyrroloquinoline quinone.

This is an uncharacterized protein from Synechocystis sp. (strain ATCC 27184 / PCC 6803 / Kazusa).